A 289-amino-acid chain; its full sequence is NAD kinase (289 aa).

Aspartate 68 acts as the Proton acceptor in catalysis. Residues 68–69 (DG), lysine 73, 142–143 (ND), arginine 153, aspartate 172, 183–188 (TAYSLS), and glutamine 243 contribute to the NAD(+) site.

This sequence belongs to the NAD kinase family. A divalent metal cation is required as a cofactor.

It is found in the cytoplasm. It carries out the reaction NAD(+) + ATP = ADP + NADP(+) + H(+). Involved in the regulation of the intracellular balance of NAD and NADP, and is a key enzyme in the biosynthesis of NADP. Catalyzes specifically the phosphorylation on 2'-hydroxyl of the adenosine moiety of NAD to yield NADP. This Acetivibrio thermocellus (strain ATCC 27405 / DSM 1237 / JCM 9322 / NBRC 103400 / NCIMB 10682 / NRRL B-4536 / VPI 7372) (Clostridium thermocellum) protein is NAD kinase.